The primary structure comprises 368 residues: Protein pxr1 (368 aa).

Disordered regions lie at residues 1-28 (MGLA…TDSF) and 161-339 (KEKA…PMGI). The span at 15 to 27 (DPNNTRWSGNTDS) shows a compositional bias: polar residues. The 55-residue stretch at 25 to 79 (TDSFGHRMMKSQGWTPGEYLGAKDAAHAEFHTEANASHIRVVIKDNTLGLGAKIG) folds into the G-patch domain. Residues 168 to 182 (SSEESDSSSDEEEEK) are compositionally biased toward acidic residues. Basic residues-rich tracts occupy residues 209 to 226 (SKKS…KSKK), 242 to 254 (KSKK…KSKS), 271 to 283 (KARK…KKRK), and 301 to 312 (SSKKSKKDKHKS). Positions 313 to 324 (PSTSKTSTKEST) are enriched in low complexity. Positions 325–334 (PIVSESSGRS) are enriched in polar residues.

Belongs to the PINX1 family.

It is found in the nucleus. It localises to the nucleolus. Involved in rRNA-processing at A0, A1 and A2 sites and negatively regulates telomerase. This Botryotinia fuckeliana (strain B05.10) (Noble rot fungus) protein is Protein pxr1 (pxr1).